The following is a 744-amino-acid chain: Tripartite motif-containing protein 2 (744 aa).

The residue at position 10 (Ser10) is a Phosphoserine. The RING-type zinc-finger motif lies at 23–64 (CSICLERYKNPKVLPCLHTFCERCLQNYIPAHSLTLSCPVCR). The segment at 113-154 (GKPLSCPNHDGNVMEFYCQSCETAMCRECTEGEHAEHPTVPL) adopts a B box-type zinc-finger fold. Zn(2+) is bound by residues Cys118, His121, Cys141, and His146. Residues 320-421 (TTNAVASETV…IRGSPFKLKV (102 aa)) form a Filamin repeat. The residue at position 371 (Thr371) is a Phosphothreonine. Phosphoserine is present on residues Ser375, Ser424, and Ser428. The disordered stretch occupies residues 432-462 (EGVKRRVKSPGSGHVKQKAVKRPASMYSTGK). NHL repeat units lie at residues 473-516 (IFRV…FSND), 520-563 (KSRF…FSND), 564-605 (GKFK…FQPN), 609-652 (VTRF…FNQE), 656-699 (MLKF…FDGS), and 700-743 (GSFL…YRYL).

This sequence belongs to the TRIM/RBCC family. Forms homooligomers. Interacts with TRIM3; this interaction reduces TRIM2 activity. Interacts with myosin V; myosin V may not be a substrate for ubiquitination. Interacts with NEFL. Interacts with phosphorylated BCL2L11. Interacts with SIRPA. Post-translationally, RING-type zinc finger-dependent and UBE2D1-dependent autoubiquitination. As to expression, highly expressed in the cerebellum, hippocampus, retina and spinal cord. In the cerebellum, strongest expression in Purkinje cells and in the deep cerebellar nuclei. In retina, high expression in the ganglionic cell layer, inner nuclear layer and inthe outer plexiform layer. Particularly high expression in the hippocampus, in pyramidal cells of CA1-CA3 hippocampal areas and ingranule cells of the dentate gyrus.

The protein localises to the cytoplasm. It carries out the reaction S-ubiquitinyl-[E2 ubiquitin-conjugating enzyme]-L-cysteine + [acceptor protein]-L-lysine = [E2 ubiquitin-conjugating enzyme]-L-cysteine + N(6)-ubiquitinyl-[acceptor protein]-L-lysine.. The protein operates within protein modification; protein ubiquitination. UBE2D1-dependent E3 ubiquitin-protein ligase that mediates the ubiquitination of NEFL and of phosphorylated BCL2L11. Plays a neuroprotective function. May play a role in neuronal rapid ischemic tolerance. Plays a role in antiviral immunity and limits new world arenavirus infection independently of its ubiquitin ligase activity by decreasing virus internalization. The sequence is that of Tripartite motif-containing protein 2 (Trim2) from Mus musculus (Mouse).